The chain runs to 503 residues: Glutamate--tRNA ligase (503 aa).

Positions 26-36 (PSPTGTPHVGL) match the 'HIGH' region motif. Positions 126 to 148 (TPEEVEARHRAAGRDPKLGYDNA) are disordered. Residues 130-148 (VEARHRAAGRDPKLGYDNA) show a composition bias toward basic and acidic residues. The 'KMSKS' region motif lies at 270-274 (KLSKR). Lysine 273 is a binding site for ATP.

The protein belongs to the class-I aminoacyl-tRNA synthetase family. Glutamate--tRNA ligase type 1 subfamily. As to quaternary structure, monomer.

The protein resides in the cytoplasm. It catalyses the reaction tRNA(Glu) + L-glutamate + ATP = L-glutamyl-tRNA(Glu) + AMP + diphosphate. Functionally, catalyzes the attachment of glutamate to tRNA(Glu) in a two-step reaction: glutamate is first activated by ATP to form Glu-AMP and then transferred to the acceptor end of tRNA(Glu). The protein is Glutamate--tRNA ligase of Saccharopolyspora erythraea (strain ATCC 11635 / DSM 40517 / JCM 4748 / NBRC 13426 / NCIMB 8594 / NRRL 2338).